The primary structure comprises 193 residues: Phosphoheptose isomerase (193 aa).

The region spanning 37–193 (LADSFKAGGK…QLIEKEMVKA (157 aa)) is the SIS domain. Substrate is bound at residue 52–54 (NGG). Positions 61 and 65 each coordinate Zn(2+). Residues E65, 93-94 (ND), 119-121 (STS), S124, and Q172 contribute to the substrate site. The Zn(2+) site is built by Q172 and H180.

It belongs to the SIS family. GmhA subfamily. As to quaternary structure, homotetramer. The cofactor is Zn(2+).

It is found in the cytoplasm. It carries out the reaction 2 D-sedoheptulose 7-phosphate = D-glycero-alpha-D-manno-heptose 7-phosphate + D-glycero-beta-D-manno-heptose 7-phosphate. It participates in carbohydrate biosynthesis; D-glycero-D-manno-heptose 7-phosphate biosynthesis; D-glycero-alpha-D-manno-heptose 7-phosphate and D-glycero-beta-D-manno-heptose 7-phosphate from sedoheptulose 7-phosphate: step 1/1. Its function is as follows. Catalyzes the isomerization of sedoheptulose 7-phosphate in D-glycero-D-manno-heptose 7-phosphate. This is Phosphoheptose isomerase from Serratia proteamaculans (strain 568).